The sequence spans 68 residues: NSAHPCCDPVKCEPREGEHCISGPCCRNCKFLNAGTICKKAMLDGLNDYCTGISSDCPRNRYKGKEDD.

Residues 1–65 (NSAHPCCDPV…DCPRNRYKGK (65 aa)) form the Disintegrin domain. Intrachain disulfides connect C6/C29, C20/C26, C25/C50, and C38/C57. The Cell attachment site; atypical (MLD) motif lies at 42–44 (MLD).

Belongs to the disintegrin family. Dimeric disintegrin subfamily. Heterodimer; disulfide-linked. As to expression, expressed by the venom gland.

Its subcellular location is the secreted. Its function is as follows. Poor inhibitor of platelet aggregation. The disintegrin inhibits the adhesion of both the alpha-4/beta-1 (ITGA4/ITGB1) and the alpha-5/beta-1 (ITGA5/ITGB1) integrins to VCAM-1 and fibronectin respectively with almost the same degree of specificity. Inhibition on alpha-IIb/beta-3 (ITGA2B/ITGB3) is low. This chain is Disintegrin EMS11A, found in Echis multisquamatus (Central Asian sand viper).